Consider the following 246-residue polypeptide: Mediator of RNA polymerase II transcription subunit 6 (246 aa).

The disordered stretch occupies residues 193 to 246 (VQLKPGEKPVPVDQTKKEAEPIPETVKPEEKETTKNVQQTVSAKGPPEKRMRLQ). A compositionally biased stretch (basic and acidic residues) spans 206-226 (QTKKEAEPIPETVKPEEKETT). A Glycyl lysine isopeptide (Lys-Gly) (interchain with G-Cter in SUMO2) cross-link involves residue lysine 208. An N6-acetyllysine mark is found at lysine 236 and lysine 241.

This sequence belongs to the Mediator complex subunit 6 family. Component of the Mediator complex, which is composed of MED1, MED4, MED6, MED7, MED8, MED9, MED10, MED11, MED12, MED13, MED13L, MED14, MED15, MED16, MED17, MED18, MED19, MED20, MED21, MED22, MED23, MED24, MED25, MED26, MED27, MED29, MED30, MED31, CCNC, CDK8 and CDC2L6/CDK11. The MED12, MED13, CCNC and CDK8 subunits form a distinct module termed the CDK8 module. Mediator containing the CDK8 module is less active than Mediator lacking this module in supporting transcriptional activation. Individual preparations of the Mediator complex lacking one or more distinct subunits have been variously termed ARC, CRSP, DRIP, PC2, SMCC and TRAP. Interacts with CTNNB1 and GLI3.

The protein resides in the nucleus. Functionally, component of the Mediator complex, a coactivator involved in the regulated transcription of nearly all RNA polymerase II-dependent genes. Mediator functions as a bridge to convey information from gene-specific regulatory proteins to the basal RNA polymerase II transcription machinery. Mediator is recruited to promoters by direct interactions with regulatory proteins and serves as a scaffold for the assembly of a functional preinitiation complex with RNA polymerase II and the general transcription factors. The sequence is that of Mediator of RNA polymerase II transcription subunit 6 (MED6) from Homo sapiens (Human).